The chain runs to 596 residues: uncharacterized protein (596 aa).

Positions 1 to 31 are disordered; that stretch reads MSTSNDPVVSSHDPIKQEKEQETDLEAQVEH. The Cytoplasmic segment spans residues 1 to 37; that stretch reads MSTSNDPVVSSHDPIKQEKEQETDLEAQVEHKKRNER. Basic and acidic residues predominate over residues 13 to 22; that stretch reads DPIKQEKEQE. Residues 38 to 58 traverse the membrane as a helical segment; it reads GNAFVGFLILIFVYYLLRGGS. Residues 59 to 596 are Lumenal-facing; it reads NDNDKQEMSH…ILVSDSGEEA (538 aa). Asn118 carries an N-linked (GlcNAc...) asparagine glycan. Residue His197 coordinates Zn(2+). The active site involves Asp199. Asp232 is a Zn(2+) binding site. The active-site Proton acceptor is Glu266. Zn(2+) contacts are provided by Glu267 and Asp295. Asn466, Asn541, and Asn555 each carry an N-linked (GlcNAc...) asparagine glycan. Residue His565 participates in Zn(2+) binding.

This sequence belongs to the peptidase M20A family. It depends on Zn(2+) as a cofactor.

It localises to the vacuole membrane. This is an uncharacterized protein from Schizosaccharomyces pombe (strain 972 / ATCC 24843) (Fission yeast).